Reading from the N-terminus, the 389-residue chain is DNA replication and repair protein RecF (389 aa).

30–37 (GPNGFGKT) serves as a coordination point for ATP.

It belongs to the RecF family.

The protein resides in the cytoplasm. Its function is as follows. The RecF protein is involved in DNA metabolism; it is required for DNA replication and normal SOS inducibility. RecF binds preferentially to single-stranded, linear DNA. It also seems to bind ATP. In Mycolicibacterium gilvum (strain PYR-GCK) (Mycobacterium gilvum (strain PYR-GCK)), this protein is DNA replication and repair protein RecF.